Here is a 405-residue protein sequence, read N- to C-terminus: Polyadenylate-binding protein RBP45B (405 aa).

Positions 1 to 19 (MMQQPPPGGILPHHAPPPS) are enriched in pro residues. Residues 1 to 54 (MMQQPPPGGILPHHAPPPSAQQQYGYQQPYGIAGAAPPPPQMWNPQAAAPPSVQ) form a disordered region. Residues 20 to 35 (AQQQYGYQQPYGIAGA) are compositionally biased toward low complexity. RRM domains lie at 62 to 143 (RTLW…WASL), 155 to 234 (YTIF…PAAS), and 261 to 333 (TTVF…WGRS). Residues 379–405 (GGYQQTPQAGQQPPQQPPQQQQVGFSY) form a disordered region. Residues 380–405 (GYQQTPQAGQQPPQQPPQQQQVGFSY) are compositionally biased toward low complexity.

Belongs to the polyadenylate-binding RBP45 family. In terms of assembly, both isoform 1 and isoform 2 interact with poly(A)+ RNA in nucleus. As to expression, expressed in roots, leaves, stems, flowers, siliques, and seedlings. Present in immature anther tissues (tapetum cells) and mature pollen grains.

It localises to the nucleus. Functionally, heterogeneous nuclear ribonucleoprotein (hnRNP)-protein binding the poly(A) tail of mRNA and probably involved in some steps of pre-mRNA maturation. The protein is Polyadenylate-binding protein RBP45B (RBP45B) of Arabidopsis thaliana (Mouse-ear cress).